The following is a 651-amino-acid chain: p-hydroxybenzoic acid efflux pump subunit AaeB (651 aa).

Transmembrane regions (helical) follow at residues 11–31 (FAFK…HLQL), 41–61 (AAIV…SGAI), 67–87 (LRII…VLTI), 91–111 (VLTL…SSLV), 119–139 (FGLA…TPLL), 150–170 (EIVL…PRSI), 368–388 (LFWL…IAVV), 405–425 (FLVG…FIIP), 429–449 (QSML…GIEV), 455–475 (GSLG…PMIF), and 481–501 (LDSA…LLLI).

Belongs to the aromatic acid exporter ArAE (TC 2.A.85) family.

The protein resides in the cell inner membrane. Its function is as follows. Forms an efflux pump with AaeA. Could function as a metabolic relief valve, allowing to eliminate certain compounds when they accumulate to high levels in the cell. This Yersinia pseudotuberculosis serotype O:1b (strain IP 31758) protein is p-hydroxybenzoic acid efflux pump subunit AaeB.